A 515-amino-acid polypeptide reads, in one-letter code: Maturase K (515 aa).

The protein belongs to the intron maturase 2 family. MatK subfamily.

Its subcellular location is the plastid. The protein resides in the chloroplast. In terms of biological role, usually encoded in the trnK tRNA gene intron. Probably assists in splicing its own and other chloroplast group II introns. In Pinus koraiensis (Korean pine), this protein is Maturase K.